Here is a 2531-residue protein sequence, read N- to C-terminus: Highly reducing polyketide synthase gloL (2531 aa).

In terms of domain architecture, Ketosynthase family 3 (KS3) spans 15-435 (YEPLAIVGMG…GANAHVILDS (421 aa)). Residues Cys-187, His-322, and His-358 each act as for beta-ketoacyl synthase activity in the active site. The interval 449-525 (TNGLSVNGHS…GHSVNGHSKP (77 aa)) is disordered. Residues 453-503 (SVNGHSINGNSVNGHSVNGHSTNGHSINGNSVNGHSVNGNSVNGHSTNGHS) are compositionally biased toward low complexity. Polar residues predominate over residues 505–521 (NGHSANGNSINGHSVNG). The segment at 602–909 (MVFTGQGAQW…VTALERGKDC (308 aa)) is malonyl-CoA:ACP transacylase (MAT) domain. The interval 971-1099 (HEILGSRTVE…GQIRSGTDNP (129 aa)) is N-terminal hotdog fold. The interval 971–1251 (HEILGSRTVE…GGQFSPIEED (281 aa)) is dehydratase (DH) domain. A PKS/mFAS DH domain is found at 971-1254 (HEILGSRTVE…FSPIEEDSSD (284 aa)). His-1003 (proton acceptor; for dehydratase activity) is an active-site residue. The segment at 1109-1254 (DHPRSVPSPY…FSPIEEDSSD (146 aa)) is C-terminal hotdog fold. The active-site Proton donor; for dehydratase activity is the Asp-1169. The segment at 1419–1597 (DFFTAAGHSK…FSGCDATVYD (179 aa)) is methyltransferase (CMet) domain. An enoyl reductase (ER) (ER) domain region spans residues 1806-2114 (GLLQTLRWVP…KGSHIGKIVV (309 aa)). Residues 2139–2312 (GYLLVGGLGG…ASVVDIGVMG (174 aa)) are ketoreductase (KR) domain. The 93-residue stretch at 2413–2505 (MSSVETDSSI…ALGLLTIEGL (93 aa)) folds into the Carrier domain. An O-(pantetheine 4'-phosphoryl)serine modification is found at Ser-2464.

The protein operates within mycotoxin biosynthesis. In terms of biological role, highly reducing polyketide synthase; part of the gene cluster that mediates the biosynthesis of pneumocandins, lipohexapeptides of the echinocandin family that prevent fungal cell wall formation by non-competitive inhibition of beta-1,3-glucan synthase. The 10,12-dimethylmyristoyl side chain is synthesized by the reducing polyketide synthase gloL/GLPKS4. The thioesterase gloN/GLHYD exclusively interacts with gloL/GLPKS4 to maintain turnover of the polyketide side chain. The 10R,12S-dimethylmyristic acid is then transferred to the first thiolation domain of the nonribosomal peptide synthetase gloA/GLNRPS4 by the acyl-AMP ligase gloD/GLligase, followed by its acylation to L-ornithine to trigger elongation of the cyclic hexapeptide. L-ornithine, 4R-hydroxyl-L-proline (generated from L-proline by the dioxygenase gloF/GLOXY2), 3S-hydroxyl-L-homotyrosine (generated by gloG/GLHtyB, gloH/GLHtyA, gloI/GLHtyC, gloJ/GLHtyD and hydroxylated at C-3 by the dioxygenase gloM/GLOXY1), 3R-hydroxyl-L-glutamine (generated from L-glutamine probably by the dioxygenase gloE/GLOXY3) and 3S-hydroxyl-L-proline (generated from L-proline by the dioxygenase gloF/GLOXY2 to yield pneumocandin B0), or 3S-hydroxyl-4S-methyl-L-proline (generated from L-leucine by the dioxygenase gloC/GLOXY4 to yield pneumocandin A0) are sequentially added to the growing chain. The last C domain of gloA/GLNRPS4 is proposed to be responsible for cyclization by condensation to form the peptide bond between L-ornithine and 3S-hydroxyl-4S-methyl-L-proline (for pneumocandin A0) or 3S-hydroxyl-L-proline (for pneumocandin B0). Finally, the subsequent C-4 hydroxylation of 3S-hydroxyl-L-homotyrosine and L-ornithine dihydroxylation at C-4 and C-5 are performed by the cytochrome P450 monooxygenases gloP/GLP450-1 and gloO/GLP450-2, respectively. In Glarea lozoyensis (strain ATCC 20868 / MF5171), this protein is Highly reducing polyketide synthase gloL.